We begin with the raw amino-acid sequence, 101 residues long: Apolipoprotein C-II (101 aa).

An N-terminal signal peptide occupies residues 1-22 (MGTRFLLALCLVLLVLGFEVQG). Positions 66 to 74 (AVDEKLRDL) are lipid binding. Residues 78-101 (STAAMSTYTGIFTDQVLSVLKGEE) form a lipoprotein lipase cofactor region.

It belongs to the apolipoprotein C2 family. Post-translationally, proapolipoprotein C-II is synthesized as a sialic acid containing glycoprotein which is subsequently desialylated prior to its proteolytic processing. Proapolipoprotein C-II, the major form found in plasma undergoes proteolytic cleavage of its N-terminal hexapeptide to generate apolipoprotein C-II, which occurs as the minor form in plasma.

It is found in the secreted. Its function is as follows. Component of chylomicrons, very low-density lipoproteins (VLDL), low-density lipoproteins (LDL), and high-density lipoproteins (HDL) in plasma. Plays an important role in lipoprotein metabolism as an activator of lipoprotein lipase. Both proapolipoprotein C-II and apolipoprotein C-II can activate lipoprotein lipase. The protein is Apolipoprotein C-II (APOC2) of Macaca fascicularis (Crab-eating macaque).